Reading from the N-terminus, the 465-residue chain is COP9 signalosome complex subunit 5 (465 aa).

An MPN domain is found at 74-216 (VLLSKLACSK…IGSFRTYQDQ (143 aa)). Residues H162, H164, and D175 each coordinate Zn(2+). Positions 162 to 175 (HSHPGYDCWLSNID) match the JAMM motif motif. The tract at residues 364 to 386 (SSIHTQMNNQNNQQERNSPKRPH) is disordered.

This sequence belongs to the peptidase M67A family. CSN5 subfamily. In terms of assembly, component of the COP9 signalosome (CSN) complex.

It is found in the cytoplasm. The protein resides in the nucleus. Functionally, catalytic Component of the COP9 signalosome (CSN) complex that acts as an regulator of the ubiquitin (Ubl) conjugation pathway by mediating the deneddylation of the cullin subunit of SCF-type E3 ubiquitin-protein ligase complexes. The polypeptide is COP9 signalosome complex subunit 5 (RRI1) (Candida glabrata (strain ATCC 2001 / BCRC 20586 / JCM 3761 / NBRC 0622 / NRRL Y-65 / CBS 138) (Yeast)).